Consider the following 266-residue polypeptide: Hydroxyethylthiazole kinase (266 aa).

Met44 lines the substrate pocket. ATP-binding residues include Lys120 and Thr166. Gly193 lines the substrate pocket.

Belongs to the Thz kinase family. It depends on Mg(2+) as a cofactor.

It carries out the reaction 5-(2-hydroxyethyl)-4-methylthiazole + ATP = 4-methyl-5-(2-phosphooxyethyl)-thiazole + ADP + H(+). Its pathway is cofactor biosynthesis; thiamine diphosphate biosynthesis; 4-methyl-5-(2-phosphoethyl)-thiazole from 5-(2-hydroxyethyl)-4-methylthiazole: step 1/1. In terms of biological role, catalyzes the phosphorylation of the hydroxyl group of 4-methyl-5-beta-hydroxyethylthiazole (THZ). The sequence is that of Hydroxyethylthiazole kinase from Syntrophomonas wolfei subsp. wolfei (strain DSM 2245B / Goettingen).